A 262-amino-acid chain; its full sequence is Serine/arginine-rich SC35-like splicing factor SCL30A (262 aa).

Disordered regions lie at residues M1–S38 and E115–Q262. Phosphoserine is present on residues S9 and S20. An RRM domain is found at T37–E115. A compositionally biased stretch (basic and acidic residues) spans E115–R140. Positions P150–S161 are enriched in basic residues. Residues S166, S174, S176, and S178 each carry the phosphoserine modification. Over residues Q180–Y190 the composition is skewed to basic and acidic residues. Phosphoserine occurs at positions 191 and 193. Positions V209–R226 are enriched in basic residues. The segment covering R234–P246 has biased composition (low complexity). Phosphoserine occurs at positions 235, 259, and 261.

This sequence belongs to the splicing factor SR family. SCL subfamily. Component of the spliceosome. Interacts with SNRNP35, CYP59 and RS2Z33.

It is found in the nucleus speckle. Functionally, involved in intron recognition and spliceosome assembly. Binds probably to multiple 5'-GAAG-3' repeats found in its third intron, suggesting autoregulation of alternative splicing. May be necessary for accurate splicing of the 3' region of introns. The chain is Serine/arginine-rich SC35-like splicing factor SCL30A (SCL30A) from Arabidopsis thaliana (Mouse-ear cress).